The chain runs to 361 residues: Biotin synthase (361 aa).

Residues 83-308 enclose the Radical SAM core domain; sequence PEVEVEGIIS…RTILRYAGGR (226 aa). Residues Cys-98, Cys-102, and Cys-105 each contribute to the [4Fe-4S] cluster site. Residues Cys-141, Cys-174, Cys-233, and Arg-303 each contribute to the [2Fe-2S] cluster site.

Belongs to the radical SAM superfamily. Biotin synthase family. As to quaternary structure, homodimer. The cofactor is [4Fe-4S] cluster. [2Fe-2S] cluster serves as cofactor.

The enzyme catalyses (4R,5S)-dethiobiotin + (sulfur carrier)-SH + 2 reduced [2Fe-2S]-[ferredoxin] + 2 S-adenosyl-L-methionine = (sulfur carrier)-H + biotin + 2 5'-deoxyadenosine + 2 L-methionine + 2 oxidized [2Fe-2S]-[ferredoxin]. It functions in the pathway cofactor biosynthesis; biotin biosynthesis; biotin from 7,8-diaminononanoate: step 2/2. Its function is as follows. Catalyzes the conversion of dethiobiotin (DTB) to biotin by the insertion of a sulfur atom into dethiobiotin via a radical-based mechanism. The chain is Biotin synthase from Parafrankia sp. (strain EAN1pec).